Reading from the N-terminus, the 147-residue chain is CLAVATA3/ESR (CLE)-related protein 4C (147 aa).

The first 21 residues, 1 to 21 (MATNTMLCLFVISVVLALAFA), serve as a signal peptide directing secretion. A required for secretion from the host cytoplasm to the host apoplasm region spans residues 21-83 (ATNKKGDEEP…SNQLPNNNWM (63 aa)). N-linked (GlcNAc...) asparagine glycosylation occurs at Asn-32. Disordered stretches follow at residues 57 to 86 (GADA…MAPP) and 116 to 147 (RKTG…PIHH). The segment covering 125–137 (HHEETTLEQEKRV) has biased composition (basic and acidic residues). The CLE motif lies at 136–147 (RVAGAGPDPIHH).

It belongs to the CLV3/ESR signal peptide family. Highly expressed exclusively within the dorsal esophageal gland cell during syncytium formation in host plants.

It localises to the secreted. It is found in the host cytoplasm. The protein resides in the host extracellular space. The protein localises to the extracellular space. Its subcellular location is the apoplast. Its function is as follows. Mimics host plant CLE extracellular signal peptides that regulate cell fate. May play a role in the differentiation or division of feeding cells (syncytia) induced in plant roots during infection. In Globodera rostochiensis (Golden nematode worm), this protein is CLAVATA3/ESR (CLE)-related protein 4C (CLE-4C).